A 215-amino-acid polypeptide reads, in one-letter code: Oligoribonuclease (215 aa).

Residues 5 to 170 (LVWIDCEMTG…ADIHESIREL (166 aa)) enclose the Exonuclease domain. The active site involves Y127. A disordered region spans residues 196 to 215 (LSDGAGAQEETDSAEAPQSG).

This sequence belongs to the oligoribonuclease family.

The protein localises to the cytoplasm. In terms of biological role, 3'-to-5' exoribonuclease specific for small oligoribonucleotides. The chain is Oligoribonuclease from Mycobacterium bovis (strain BCG / Pasteur 1173P2).